Reading from the N-terminus, the 621-residue chain is MCGIIGYVGEGSCRDVLINGLDKLSYRGYDSAGIAFIKNSKINVVRSKGRIEKLKEKINDNFQKFEIGNIGIGHTRWATHGEPTEINAHPHLDAEGQFAVVQNGVIENYVQLKNYLTVNGTYFLSDTDAEVIPHLIAYKQKHLKLQIVEAILCALSELKGNFSTVIIARDMPDSIFVYQNKTALTLGKGSNFYSVSSDPIALIPYTKNFIQLHDRELGIISISQLAIYNKGKFTYPSRRFKANLNDLITNKASFDSYTLKEIHDQKKVLRNLIISTLQSEKSIDESGQLHLEYKKIKNFQIIACGSSFNAALVGKVILEKLIRIPVHVYYGSEFKTNLPPLLPCTLTIAVSQSGETGDMLSAIEIEKSRRKFQNTVYKPYLLSITNKNYSSITKKTAQSIDLKAGIEIGVAATKTFTAQTLSFYLLALKLAEHKFTLRKKEINKHLDEIRNLPKAIAHLLIKDESSIKWLSKQLKEISKCFYIGKGLNLGSALEGALKLKEISYIHCDGYAAGEIKHGPIALVENNTLIITITDPEQSQESTFASSQEAKARGAVLLAITHIEDSSIYQTFDFIIKIPKISQICASITSSVSLQLFAYYMAYYKGNDIDKPRNLAKSVTVE.

The active-site Nucleophile; for GATase activity is the Cys2. Positions 2–223 (CGIIGYVGEG…DRELGIISIS (222 aa)) constitute a Glutamine amidotransferase type-2 domain. 2 SIS domains span residues 289–436 (LHLE…HKFT) and 470–611 (LSKQ…IDKP). Lys616 acts as the For Fru-6P isomerization activity in catalysis.

Homodimer.

It is found in the plastid. Its subcellular location is the chloroplast. It carries out the reaction D-fructose 6-phosphate + L-glutamine = D-glucosamine 6-phosphate + L-glutamate. Functionally, catalyzes the first step in hexosamine metabolism, converting fructose-6P into glucosamine-6P using glutamine as a nitrogen source. The sequence is that of Glutamine--fructose-6-phosphate aminotransferase [isomerizing] from Cyanidium caldarium (Red alga).